The sequence spans 260 residues: tRNA pseudouridine synthase A (260 aa).

D52 (nucleophile) is an active-site residue. Y110 serves as a coordination point for substrate.

Belongs to the tRNA pseudouridine synthase TruA family. In terms of assembly, homodimer.

The catalysed reaction is uridine(38/39/40) in tRNA = pseudouridine(38/39/40) in tRNA. Functionally, formation of pseudouridine at positions 38, 39 and 40 in the anticodon stem and loop of transfer RNAs. The sequence is that of tRNA pseudouridine synthase A from Spiroplasma kunkelii.